A 779-amino-acid polypeptide reads, in one-letter code: Angiomotin-like protein 2 (779 aa).

Disordered stretches follow at residues 41–215 and 263–308; these read GGAG…QYPH and QYLQ…TSGS. Composition is skewed to basic and acidic residues over residues 100 to 112 and 141 to 152; these read KGEELPTYEEAKA and RRQDEALRELRH. Positions 101–307 are required for interaction with CDH5; that stretch reads GEELPTYEEA…SAQASSATSG (207 aa). At Tyr-107 the chain carries Phosphotyrosine; by FGFR1. Over residues 160 to 169 the composition is skewed to low complexity; the sequence is ERLLQLSLER. Over residues 177-193 the composition is skewed to polar residues; sequence HMSSSHSFPQLARNQQG. Positions 196 to 213 are enriched in pro residues; the sequence is LRGPPAEGPESRGPPPQY. The interval 220–307 is required for interaction with CDH1; it reads HETTTAVTDP…SAQASSATSG (88 aa). The span at 298-308 shows a compositional bias: low complexity; sequence SAQASSATSGS. A coiled-coil region spans residues 308 to 581; it reads SAHLAQMEAV…KYLEERAMRQ (274 aa). Glycyl lysine isopeptide (Lys-Gly) (interchain with G-Cter in ubiquitin) cross-links involve residues Lys-347 and Lys-408. 2 disordered regions span residues 522–543 and 679–753; these read RAQQRQAGAPGGSSGSGGSPEL and TQGW…GCSS. Over residues 530–539 the composition is skewed to gly residues; sequence APGGSSGSGG. 2 stretches are compositionally biased toward polar residues: residues 680–690 and 725–740; these read QGWQGLSSSER and DGSTQTEGPPDSTSTC. Ser-759 and Ser-762 each carry phosphoserine. A PDZ-binding motif is present at residues 776 to 779; sequence EILI.

The protein belongs to the angiomotin family. In terms of assembly, part of a complex composed of AMOTL2, MAGI1 and CDH5, within the complex AMOTL2 acts as a scaffold protein for the interaction of MAGI1 with CDH5. The complex is required for coupling actin fibers to cell junctions in endothelial cells. Within the complex AMOTL2 (via its N-terminus) interacts with CDH5. Interacts (via N-terminus) with MAGI1. Interacts (via N-terminus) with ACTB; the interaction facilitates binding of cell junction complexes to actin fibers in endothelial cells. Interacts with CDH1; the interaction may facilitate binding of radial actin fibers to cell junction complexes. Interacts with SRC. Interacts with YAP1; the interaction is required for ubiquitination of AMOTL2 and localization of YAP1 to tight junctions. Interacts with WWP1; the interaction facilitates WWP1 interaction with the Crumbs complex and subsequent WWP1 translocation to the plasma membrane. WWP1 interaction with the Crumbs complex promotes WWP1 monoubiquitination of AMOTL2 which subsequently activates the Hippo signaling pathway. When ubiquitinated interacts with LATS2 (via UBA domain); the interaction promotes LATS2 phosphorylation of YAP1. Interacts (via PPXY motif) with WWTR1/TAZ (via WW domain); the interaction promotes WWTR1/TAZ localization to the cytoplasm and thereby inhibition of its transcriptional properties. Interacts with PHLDB2; interaction may facilitate PHLDB2 localization to the myotube podosome cortex that surrounds the core. Post-translationally, monoubiquitinated at Lys-347 and Lys-408 by Crumbs complex-bound WWP1. De-ubiquitinated at Lys-347 and Lys-408 by USP9X; the interaction may be promoted by cell contact inhibition. Deubiquitination of AMOTL2 negatively regulates Hippo signaling activation. Phosphorylation at Tyr-107 is necessary for efficient binding to SRC and synergistically functioning with SRC to activate the downstream MAPK pathway.

It is found in the recycling endosome. Its subcellular location is the cytoplasm. The protein resides in the cell projection. It localises to the podosome. The protein localises to the cell junction. Its function is as follows. Regulates the translocation of phosphorylated SRC to peripheral cell-matrix adhesion sites. Required for proper architecture of actin filaments. Plays a role in coupling actin fibers to cell junctions in endothelial cells and is therefore required for correct endothelial cell morphology via facilitating transcellular transmission of mechanical force resulting in endothelial cell elongation. Required for the anchoring of radial actin fibers to CDH1 junction complexes at the cell membrane which facilitates organization of radial actin fiber structure and cellular response to contractile forces. This contributes to maintenance of cell area, size, shape, epithelial sheet organization and trophectoderm cell properties that facilitate blastocyst zona hatching. Inhibits the Wnt/beta-catenin signaling pathway, probably by recruiting CTNNB1 to recycling endosomes and hence preventing its translocation to the nucleus. Participates in angiogenesis. Activates the Hippo signaling pathway in response to cell contact inhibition via interaction with and ubiquitination by Crumbs complex-bound WWP1. Ubiquitinated AMOTL2 then interacts with LATS2 which in turn phosphorylates YAP1, excluding it from the nucleus and localizing it to the cytoplasm and tight junctions, therefore ultimately repressing YAP1-driven transcription of target genes. Acts to inhibit WWTR1/TAZ transcriptional coactivator activity via sequestering WWTR1/TAZ in the cytoplasm and at tight junctions. Regulates the size and protein composition of the podosome cortex and core at myofibril neuromuscular junctions. Selectively promotes FGF-induced MAPK activation through SRC. May play a role in the polarity, proliferation and migration of endothelial cells. The sequence is that of Angiomotin-like protein 2 from Homo sapiens (Human).